Here is a 363-residue protein sequence, read N- to C-terminus: Probable mannitol dehydrogenase 3 (363 aa).

Zn(2+) is bound by residues C51, H73, C104, C107, C110, C118, and C168.

This sequence belongs to the zinc-containing alcohol dehydrogenase family. Zn(2+) serves as cofactor.

The enzyme catalyses D-mannitol + NAD(+) = D-mannose + NADH + H(+). Its function is as follows. Oxidizes mannitol to mannose. Provides the initial step by which translocated mannitol is committed to central metabolism and, by regulating mannitol pool size, is important in regulating salt tolerance at the cellular level. This is Probable mannitol dehydrogenase 3 (CAD3) from Stylosanthes humilis (Townsville stylo).